A 505-amino-acid polypeptide reads, in one-letter code: Proton-coupled zinc antiporter SLC30A1 (505 aa).

Over 1-10 (MGCWGRNRGR) the chain is Cytoplasmic. A helical membrane pass occupies residues 11–31 (LLCMLALTFMFMVLEVVVSRV). The Extracellular portion of the chain corresponds to 32 to 35 (TSSL). A helical membrane pass occupies residues 36–56 (AMLSDSFHMLSDVLALVVALV). Zn(2+) contacts are provided by histidine 43 and aspartate 47. Topologically, residues 57-80 (AERFARRTHATQKNTFGWIRAEVM) are cytoplasmic. The helical transmembrane segment at 81-101 (GALVNAIFLTGLCFAILLEAI) threads the bilayer. At 102-113 (ERFVEPHEMQQP) the chain is on the extracellular side. The chain crosses the membrane as a helical span at residues 114 to 134 (LVVLGVGVAGLLVNVLGLCLF). At 135-246 (HHHSGFSQDS…RAGQLNMRGV (112 aa)) the chain is on the cytoplasmic side. The tract at residues 142–215 (QDSGHSHSHG…DPEKPRSGDT (74 aa)) is disordered. Residues 187-199 (TNTLVANTSNSNG) show a composition bias toward polar residues. Residues 203–214 (DPADPEKPRSGD) show a composition bias toward basic and acidic residues. A helical membrane pass occupies residues 247–267 (FLHVLGDALGSVIVVVNALVF). 2 residues coordinate Zn(2+): histidine 249 and aspartate 253. Residues 268-306 (YFSWKGCSEGDFCVNPCFPDPCKAFVEIINSTHASVYEA) lie on the Extracellular side of the membrane. Asparagine 297 carries N-linked (GlcNAc...) asparagine glycosylation. The chain crosses the membrane as a helical span at residues 307 to 327 (GPCWVLYLDPTLCVVMVCILL). Residues 328 to 505 (YTTYPLLKES…MPNKQPESSL (178 aa)) lie on the Cytoplasmic side of the membrane. Residue serine 504 is modified to Phosphoserine.

It belongs to the cation diffusion facilitator (CDF) transporter (TC 2.A.4) family. SLC30A subfamily. In terms of assembly, homodimer. Interacts with TMEM163. Interacts and forms a complex with TMC6 and TMC8; the interaction regulates zinc transport into the ER.

It is found in the cell membrane. The protein localises to the basolateral cell membrane. Its subcellular location is the cytoplasmic vesicle membrane. The protein resides in the cytoplasm. It localises to the endoplasmic reticulum membrane. It is found in the golgi apparatus membrane. The protein localises to the nucleus membrane. It catalyses the reaction Zn(2+)(in) + 2 H(+)(out) = Zn(2+)(out) + 2 H(+)(in). In terms of biological role, zinc ion:proton antiporter that could function at the plasma membrane mediating zinc efflux from cells against its electrochemical gradient protecting them from intracellular zinc accumulation and toxicity. Alternatively, could prevent the transport to the plasma membrane of CACNB2, the L-type calcium channels regulatory subunit, through a yet to be defined mechanism. By modulating the expression of these channels at the plasma membrane, could prevent calcium and zinc influx into cells. By the same mechanism, could also prevent L-type calcium channels-mediated heavy metal influx into cells. In some cells, could also function as a zinc ion:proton antiporter mediating zinc entry into the lumen of cytoplasmic vesicles. In macrophages, can increase zinc ions concentration into the lumen of cytoplasmic vesicles containing engulfed bacteria and could help inactivate them. Forms a complex with TMC6/EVER1 and TMC8/EVER2 at the ER membrane of keratynocytes which facilitates zinc uptake into the ER. Down-regulates the activity of transcription factors induced by zinc and cytokines. This Macaca fascicularis (Crab-eating macaque) protein is Proton-coupled zinc antiporter SLC30A1.